A 233-amino-acid polypeptide reads, in one-letter code: Ubiquinone biosynthesis O-methyltransferase (233 aa).

Residues R37, G56, D77, and M121 each contribute to the S-adenosyl-L-methionine site.

The protein belongs to the methyltransferase superfamily. UbiG/COQ3 family.

It carries out the reaction a 3-demethylubiquinol + S-adenosyl-L-methionine = a ubiquinol + S-adenosyl-L-homocysteine + H(+). It catalyses the reaction a 3-(all-trans-polyprenyl)benzene-1,2-diol + S-adenosyl-L-methionine = a 2-methoxy-6-(all-trans-polyprenyl)phenol + S-adenosyl-L-homocysteine + H(+). Its pathway is cofactor biosynthesis; ubiquinone biosynthesis. Functionally, O-methyltransferase that catalyzes the 2 O-methylation steps in the ubiquinone biosynthetic pathway. This Azoarcus sp. (strain BH72) protein is Ubiquinone biosynthesis O-methyltransferase.